The sequence spans 437 residues: Interactor protein for cytohesin exchange factors 1 (437 aa).

The 100-residue stretch at 41–140 (HADCQGWLYK…WLNKLGSAVI (100 aa)) folds into the PH domain. Disordered regions lie at residues 143-225 (ESTT…PDTV) and 273-307 (LSSD…ETKV). Acidic residues predominate over residues 151 to 162 (CYSESEQEDPEI). Residues 172 to 200 (ASQTQSLTAQQASSSSPSLSGTSYSFSSL) are compositionally biased toward low complexity. Polar residues predominate over residues 201 to 214 (ENTVKTPSSFPSSL). A compositionally biased stretch (low complexity) spans 273-283 (LSSDDTSSLSS). CRAC domain regions lie at residues 315–320 (KLYKSL) and 339–348 (LRKSFVKRCK). The interval 389–437 (KYREWKVMNTLLIQDIYQQQRASPAPDDTDDTPQELKKSPSSPSVENSI) is required for interaction with CYTH2. A disordered region spans residues 406–437 (QQQRASPAPDDTDDTPQELKKSPSSPSVENSI). S411 carries the post-translational modification Phosphoserine. Positions 427-437 (SPSSPSVENSI) are enriched in polar residues.

Interacts with guanine-nucleotide exchange factors PSCD1, PSCD2, PSCD3 and PSCD4. Interacts (via C-terminus) with cytohesin-2 CYTH2.

It localises to the cytoplasm. Its subcellular location is the cell membrane. Its function is as follows. Enhances the promotion of guanine-nucleotide exchange by PSCD2 on ARF6 in a concentration-dependent manner. The protein is Interactor protein for cytohesin exchange factors 1 (IPCEF1) of Homo sapiens (Human).